The chain runs to 218 residues: Uracil-DNA glycosylase (218 aa).

D60 serves as the catalytic Proton acceptor.

This sequence belongs to the uracil-DNA glycosylase (UDG) superfamily. UNG family.

Its subcellular location is the cytoplasm. It catalyses the reaction Hydrolyzes single-stranded DNA or mismatched double-stranded DNA and polynucleotides, releasing free uracil.. Functionally, excises uracil residues from the DNA which can arise as a result of misincorporation of dUMP residues by DNA polymerase or due to deamination of cytosine. The sequence is that of Uracil-DNA glycosylase from Shewanella oneidensis (strain ATCC 700550 / JCM 31522 / CIP 106686 / LMG 19005 / NCIMB 14063 / MR-1).